We begin with the raw amino-acid sequence, 201 residues long: Recombination protein RecR (201 aa).

The C4-type zinc-finger motif lies at 57–72 (CADCRTFTEQPVCTIC). The region spanning 81–176 (GQICVVESPA…MASRIAHGVP (96 aa)) is the Toprim domain.

Belongs to the RecR family.

In terms of biological role, may play a role in DNA repair. It seems to be involved in an RecBC-independent recombinational process of DNA repair. It may act with RecF and RecO. The chain is Recombination protein RecR from Sodalis glossinidius (strain morsitans).